Reading from the N-terminus, the 625-residue chain is Protein SUPPRESSOR OF GENE SILENCING 3 (625 aa).

Disordered regions lie at residues 1–20, 30–148, and 161–195; these read MSSR…GYRP, AGTR…SAQH, and VDNA…QKSH. A compositionally biased stretch (polar residues) spans 54 to 70; the sequence is KPGNTSGKTWVSQNSNP. The segment covering 80–94 has biased composition (low complexity); the sequence is GRGSNVSGRGNNVSG. Positions 161 to 188 are enriched in acidic residues; sequence VDNASEEENDSDALDDSDDDLASDDYDS. Coiled-coil stretches lie at residues 452–533 and 564–615; these read KNKL…QQQE and IEFQ…EQLM.

Belongs to the SGS3 family. In terms of assembly, interacts with begomoviruses protein V2. Interacts with SGIP1 in cytoplasmic granules.

The protein resides in the cytoplasm. The protein localises to the perinuclear region. Its subcellular location is the cytoplasmic granule. In terms of biological role, required for post-transcriptional gene silencing and natural virus resistance. May bind nucleic acids and is essential for the biogenesis of trans-acting siRNAs but is not required for silencing induced by IR-PTGS. Involved in the juvenile-to-adult transition regulation. In case of begomoviruses infection, it is targeted by the viral protein V2 leading to suppression of post-transcriptional gene silencing. Involved in the mechanisms necessary for quick response to heat and subsequent heritable transgenerational memory of heat acclimation (global warming) such as early flowering and attenuated immunity; this process includes epigenetic regulation as well as post-transcriptional gene silencing (PTGS). In response to heat, HSFA2 is activated and promotes the expression of REF6 which in turn derepresses HSFA2, thus establishing an inheritable feedback loop able to trigger SGIP1 and subsequent SGIP1-mediated SGS3 degradation; this prevents the biosynthesis of trans-acting siRNA (tasiRNA) and leads to the release of HTT5, which drives early flowering but attenuates immunity. This chain is Protein SUPPRESSOR OF GENE SILENCING 3, found in Arabidopsis thaliana (Mouse-ear cress).